We begin with the raw amino-acid sequence, 162 residues long: Protein-export protein SecB (162 aa).

It belongs to the SecB family. As to quaternary structure, homotetramer, a dimer of dimers. One homotetramer interacts with 1 SecA dimer.

It localises to the cytoplasm. Its function is as follows. One of the proteins required for the normal export of preproteins out of the cell cytoplasm. It is a molecular chaperone that binds to a subset of precursor proteins, maintaining them in a translocation-competent state. It also specifically binds to its receptor SecA. The polypeptide is Protein-export protein SecB (Legionella pneumophila (strain Paris)).